We begin with the raw amino-acid sequence, 175 residues long: Large ribosomal subunit protein uL10 (175 aa).

The protein belongs to the universal ribosomal protein uL10 family. Part of the ribosomal stalk of the 50S ribosomal subunit. The N-terminus interacts with L11 and the large rRNA to form the base of the stalk. The C-terminus forms an elongated spine to which L12 dimers bind in a sequential fashion forming a multimeric L10(L12)X complex.

Functionally, forms part of the ribosomal stalk, playing a central role in the interaction of the ribosome with GTP-bound translation factors. The polypeptide is Large ribosomal subunit protein uL10 (Mycobacterium sp. (strain JLS)).